We begin with the raw amino-acid sequence, 398 residues long: tRNA-specific 2-thiouridylase MnmA (398 aa).

ATP-binding positions include A18–S25 and L44. Residue C112 is the Nucleophile of the active site. C112 and C213 are disulfide-bonded. An ATP-binding site is contributed by G136. The interaction with tRNA stretch occupies residues R163–Q165. The Cysteine persulfide intermediate role is filled by C213.

It belongs to the MnmA/TRMU family.

The protein resides in the cytoplasm. It carries out the reaction S-sulfanyl-L-cysteinyl-[protein] + uridine(34) in tRNA + AH2 + ATP = 2-thiouridine(34) in tRNA + L-cysteinyl-[protein] + A + AMP + diphosphate + H(+). In terms of biological role, catalyzes the 2-thiolation of uridine at the wobble position (U34) of tRNA, leading to the formation of s(2)U34. This chain is tRNA-specific 2-thiouridylase MnmA, found in Sinorhizobium medicae (strain WSM419) (Ensifer medicae).